The sequence spans 4451 residues: Gramicidin S synthase 2 (4451 aa).

Residues 467–1044 (DKTIHQLFTE…IQEISNYING (578 aa)) are domain 1 (proline-activating). Carrier domains follow at residues 971 to 1046 (VPTN…NGAK), 2006 to 2081 (APSS…ADGQ), 3052 to 3127 (RPRT…EETD), and 4090 to 4165 (APRN…THQE). O-(pantetheine 4'-phosphoryl)serine is present on residues Ser-1006, Ser-2041, Ser-3087, and Ser-4125. The domain 2 (valine-activating) stretch occupies residues 1521–2080 (DHVAVGWKDQ…SALAQYIADG (560 aa)). A domain 3 (ornithine-activating) region spans residues 2538-3135 (YATNKIFHEL…TDTEQYMAIQ (598 aa)). The domain 4 (leucine-activating) stretch occupies residues 3591–4173 (IQELFEEQVK…QESENNVHQP (583 aa)).

This sequence belongs to the ATP-dependent AMP-binding enzyme family. Large multienzyme complex of GrsA and GrsB. The cofactor is pantetheine 4'-phosphate.

Its pathway is antibiotic biosynthesis; gramicidin S biosynthesis. Its function is as follows. This protein is a multifunctional enzyme, able to activate and polymerize the amino acids Pro, Val, Orn and Leu. Activation sites for these AA consist of individual domains. The sequence is that of Gramicidin S synthase 2 (grsB) from Aneurinibacillus migulanus (Bacillus migulanus).